The following is a 261-amino-acid chain: Pimeloyl-[acyl-carrier protein] methyl ester esterase (261 aa).

The 226-residue stretch at 16 to 241 (LVLLHGWGLN…HAAHAPFISH (226 aa)) folds into the AB hydrolase-1 domain. Substrate contacts are provided by residues tryptophan 22, 82-83 (SL), and 143-147 (FLALQ). The Nucleophile role is filled by serine 82. Active-site residues include aspartate 207 and histidine 235. Histidine 235 is a binding site for substrate.

This sequence belongs to the AB hydrolase superfamily. Carboxylesterase BioH family. In terms of assembly, monomer.

The protein localises to the cytoplasm. It catalyses the reaction 6-carboxyhexanoyl-[ACP] methyl ester + H2O = 6-carboxyhexanoyl-[ACP] + methanol + H(+). It functions in the pathway cofactor biosynthesis; biotin biosynthesis. The physiological role of BioH is to remove the methyl group introduced by BioC when the pimeloyl moiety is complete. It allows to synthesize pimeloyl-ACP via the fatty acid synthetic pathway through the hydrolysis of the ester bonds of pimeloyl-ACP esters. The sequence is that of Pimeloyl-[acyl-carrier protein] methyl ester esterase from Photorhabdus laumondii subsp. laumondii (strain DSM 15139 / CIP 105565 / TT01) (Photorhabdus luminescens subsp. laumondii).